The primary structure comprises 398 residues: Cysteine protease ATG4A (398 aa).

The Nucleophile role is filled by Cys-77. Residues Asp-279 and His-281 contribute to the active site. Residues 393 to 396 (FEIL) carry the LIR motif.

Belongs to the peptidase C54 family. In terms of assembly, interacts with ATG9A; the interaction is direct.

The protein resides in the cytoplasm. It carries out the reaction [protein]-C-terminal L-amino acid-glycyl-phosphatidylethanolamide + H2O = [protein]-C-terminal L-amino acid-glycine + a 1,2-diacyl-sn-glycero-3-phosphoethanolamine. Inhibited by N-ethylmaleimide. Redox-regulated during autophagy since reducing conditions activate ATG4A whereas an oxidizing environment such as the presence of H(2)O(2) inhibits its activity. Its function is as follows. Cysteine protease that plays a key role in autophagy by mediating both proteolytic activation and delipidation of ATG8 family proteins. The protease activity is required for proteolytic activation of ATG8 family proteins: cleaves the C-terminal amino acid of ATG8 proteins to reveal a C-terminal glycine. Exposure of the glycine at the C-terminus is essential for ATG8 proteins conjugation to phosphatidylethanolamine (PE) and insertion to membranes, which is necessary for autophagy. Preferred substrate is GABARAPL2 followed by MAP1LC3A and GABARAP. Protease activity is also required to counteract formation of high-molecular weight conjugates of ATG8 proteins (ATG8ylation): acts as a deubiquitinating-like enzyme that removes ATG8 conjugated to other proteins, such as ATG3. In addition to the protease activity, also mediates delipidation of ATG8 family proteins. Catalyzes delipidation of PE-conjugated forms of ATG8 proteins during macroautophagy. Compared to ATG4B, the major protein for proteolytic activation of ATG8 proteins, shows weaker ability to cleave the C-terminal amino acid of ATG8 proteins, while it displays stronger delipidation activity. Involved in phagophore growth during mitophagy independently of its protease activity and of ATG8 proteins: acts by regulating ATG9A trafficking to mitochondria and promoting phagophore-endoplasmic reticulum contacts during the lipid transfer phase of mitophagy. Functionally, (Microbial infection) Mediates cleavage of an ATG8 protein homolog coded in the genome of cytopathogenic bovine viral diarrhea virus (BVDV). This Bos taurus (Bovine) protein is Cysteine protease ATG4A.